The sequence spans 962 residues: Nonsense-mediated mRNA decay factor SMG8 (962 aa).

Residues 634 to 661 form a disordered region; that stretch reads RSPEISSQIASSGLSSRSNSTSSGTSSA. Residues 639–661 show a composition bias toward low complexity; that stretch reads SSQIASSGLSSRSNSTSSGTSSA.

Belongs to the SMG8 family.

Involved in nonsense-mediated decay (NMD) of mRNAs containing premature stop codons. Probable component of kinase complex containing nonC and recruited to stalled ribosomes. This Drosophila virilis (Fruit fly) protein is Nonsense-mediated mRNA decay factor SMG8.